The chain runs to 612 residues: ETS-related transcription factor Elf-1 (612 aa).

4 positions are modified to phosphoserine: Ser110, Ser163, Ser167, and Ser168. Positions 156-169 (VQETNADSPGASSP) are enriched in polar residues. Positions 156 to 199 (VQETNADSPGASSPEQRKRKKGRKTKPPRPDSPTTTPNISVKKK) are disordered. Residues 172-182 (RKRKKGRKTKP) are compositionally biased toward basic residues. Ser187 is modified (phosphoserine). Thr190 bears the Phosphothreonine mark. Positions 208-290 (IYLWEFLLAL…EGQRLVYQFK (83 aa)) form a DNA-binding region, ETS. The segment at 300–361 (DDEDPSSSIE…AANPKDPVEV (62 aa)) is disordered. Low complexity predominate over residues 305-322 (SSSIESSDQSLSSTTASS). A compositionally biased stretch (polar residues) spans 323 to 335 (RNQANRSRVSSSP). Ser431 is modified (phosphoserine). Over residues 562–577 (EVEKKAEDDLNEDAEK) the composition is skewed to basic and acidic residues. The tract at residues 562–586 (EVEKKAEDDLNEDAEKSAQQPQPYV) is disordered.

The protein belongs to the ETS family. Binds to the underphosphorylated form of RB. May interact with other transcription factors in order to regulate specific genes. Interacts with RUNX1. Interacts with SP1; the interaction is inhibited by glycosylation of SP1. Predominantly found in hematopoietic cells. Detected in other cell types such as fibroblasts.

The protein localises to the nucleus. Transcription factor that activates the LYN and BLK promoters. The protein is ETS-related transcription factor Elf-1 (Elf1) of Mus musculus (Mouse).